The sequence spans 345 residues: uncharacterized protein (345 aa).

The 198-residue stretch at 1-198 (MDVLSAVLLA…LSEGLLDHEE (198 aa)) folds into the CNNM transmembrane domain. Transmembrane regions (helical) follow at residues 3-23 (VLSAVLLALLLIGANAFFVGA) and 95-115 (VPPALLHTLSLAIVVALHVLL). CBS domains follow at residues 217–280 (AVPL…PQTV) and 285–342 (VVRP…MRDG). The helical transmembrane segment at 312-332 (LALVTADNGSVVGMVALEDVV) threads the bilayer.

The protein belongs to the TerC family.

The protein localises to the cell membrane. This is an uncharacterized protein from Mycobacterium tuberculosis (strain ATCC 25618 / H37Rv).